An 88-amino-acid chain; its full sequence is Small ribosomal subunit protein uS17 (88 aa).

Belongs to the universal ribosomal protein uS17 family. In terms of assembly, part of the 30S ribosomal subunit.

One of the primary rRNA binding proteins, it binds specifically to the 5'-end of 16S ribosomal RNA. This Hahella chejuensis (strain KCTC 2396) protein is Small ribosomal subunit protein uS17.